The following is a 352-amino-acid chain: Fe(3+) ions import ATP-binding protein FbpC (352 aa).

An ABC transporter domain is found at 5–239 (LHIGHLSKSF…PADLDAVLFI (235 aa)). 37-44 (GASGCGKT) contributes to the ATP binding site.

It belongs to the ABC transporter superfamily. Fe(3+) ion importer (TC 3.A.1.10) family. As to quaternary structure, the complex is composed of two ATP-binding proteins (FbpC), two transmembrane proteins (FbpB) and a solute-binding protein (FbpA).

The protein localises to the cell inner membrane. The enzyme catalyses Fe(3+)(out) + ATP + H2O = Fe(3+)(in) + ADP + phosphate + H(+). Functionally, part of the ABC transporter complex FbpABC involved in Fe(3+) ions import. Responsible for energy coupling to the transport system. The sequence is that of Fe(3+) ions import ATP-binding protein FbpC from Neisseria gonorrhoeae.